The following is a 108-amino-acid chain: uncharacterized protein (108 aa).

A signal peptide spans 1–16 (MKKLILIAIMASGLVA). Residue C17 is the site of N-palmitoyl cysteine attachment. C17 is lipidated: S-diacylglycerol cysteine.

It localises to the cell membrane. This is an uncharacterized protein from Escherichia coli (strain K12).